A 371-amino-acid chain; its full sequence is Germination protease (371 aa).

A propeptide spanning residues M1–D16 is cleaved from the precursor.

It belongs to the peptidase A25 family. As to quaternary structure, homotetramer. In terms of processing, autoproteolytically processed. The inactive tetrameric zymogen termed p46 autoprocesses to a smaller form termed p41, which is active only during spore germination.

It carries out the reaction Endopeptidase action with P4 Glu or Asp, P1 preferably Glu &gt; Asp, P1' hydrophobic and P2' Ala.. In terms of biological role, initiates the rapid degradation of small, acid-soluble proteins during spore germination. This Bacillus pumilus (strain SAFR-032) protein is Germination protease.